Here is a 194-residue protein sequence, read N- to C-terminus: ATP-dependent Clp protease proteolytic subunit (194 aa).

S98 acts as the Nucleophile in catalysis. H123 is a catalytic residue.

Belongs to the peptidase S14 family. As to quaternary structure, fourteen ClpP subunits assemble into 2 heptameric rings which stack back to back to give a disk-like structure with a central cavity, resembling the structure of eukaryotic proteasomes.

It is found in the cytoplasm. The enzyme catalyses Hydrolysis of proteins to small peptides in the presence of ATP and magnesium. alpha-casein is the usual test substrate. In the absence of ATP, only oligopeptides shorter than five residues are hydrolyzed (such as succinyl-Leu-Tyr-|-NHMec, and Leu-Tyr-Leu-|-Tyr-Trp, in which cleavage of the -Tyr-|-Leu- and -Tyr-|-Trp bonds also occurs).. Functionally, cleaves peptides in various proteins in a process that requires ATP hydrolysis. Has a chymotrypsin-like activity. Plays a major role in the degradation of misfolded proteins. The polypeptide is ATP-dependent Clp protease proteolytic subunit (Alkaliphilus metalliredigens (strain QYMF)).